The following is a 398-amino-acid chain: Mu-type opioid receptor (398 aa).

Over 1 to 66 the chain is Extracellular; sequence MDSSAGPGNI…CPQTGSPSMV (66 aa). N-linked (GlcNAc...) asparagine glycans are attached at residues N9, N31, N38, and N46. A helical membrane pass occupies residues 67–91; that stretch reads TAITIMALYSIVCVVGLFGNFLVMY. Residues 92-104 lie on the Cytoplasmic side of the membrane; the sequence is VIVRYTKMKTATN. A helical transmembrane segment spans residues 105–129; it reads IYIFNLALADALATSTLPFQSVNYL. Residues 130 to 140 are Extracellular-facing; the sequence is MGTWPFGNILC. The cysteines at positions 140 and 217 are disulfide-linked. The chain crosses the membrane as a helical span at residues 141 to 163; that stretch reads KIVISIDYYNMFTSIFTLCTMSV. Over 164 to 183 the chain is Cytoplasmic; that stretch reads DRYIAVCHPVKALDFRTPRN. Y166 bears the Phosphotyrosine mark. The chain crosses the membrane as a helical span at residues 184-205; sequence AKIVNVCNWILSSAIGLPVMFM. Topologically, residues 206–228 are extracellular; that stretch reads ATTKYRQGSIDCTLTFSHPTWYW. Residues 229 to 253 traverse the membrane as a helical segment; it reads ENLLKICVFIFAFIMPVLIITVCYG. Over 254–277 the chain is Cytoplasmic; the sequence is LMILRLKSVRMLSGSKEKDRNLRR. The helical transmembrane segment at 278 to 304 threads the bilayer; that stretch reads ITRMVLVVVAVFIVCWTPIHIYVIIKA. Residues 305-312 are Extracellular-facing; that stretch reads LITIPETT. Residues 313–336 traverse the membrane as a helical segment; the sequence is FQTVSWHFCIALGYTNSCLNPVLY. The short motif at 332-336 is the NPxxY; plays a role in stabilizing the activated conformation of the receptor element; that stretch reads NPVLY. Topologically, residues 337–398 are cytoplasmic; it reads AFLDENFKRC…NLEAETAPLP (62 aa). C351 carries S-palmitoyl cysteine lipidation. Residues 362–383 form a disordered region; sequence NSARIRQNTREHPSTANTVDRT. S363 is modified (phosphoserine). T370 carries the post-translational modification Phosphothreonine. S375 carries the phosphoserine modification. Phosphothreonine is present on T394.

This sequence belongs to the G-protein coupled receptor 1 family. As to quaternary structure, forms homooligomers and heterooligomers with other GPCRs, such as OPRD1, OPRK1, OPRL1, NPFFR2, ADRA2A, SSTR2, CNR1 and CCR5 (probably in dimeric forms). Interacts with heterotrimeric G proteins; interaction with a heterotrimeric complex containing GNAI1, GNB1 and GNG2 stabilizes the active conformation of the receptor and increases its affinity for endomorphin-2, the synthetic opioid peptide DAMGO and for morphinan agonists. Interacts with PPL; the interaction disrupts agonist-mediated G-protein activation. Interacts (via C-terminus) with DNAJB4 (via C-terminus). Interacts with calmodulin; the interaction inhibits the constitutive activity of OPRM1; it abolishes basal and attenuates agonist-stimulated G-protein coupling. Interacts with FLNA, PLD2, RANBP9 and WLS and GPM6A. Interacts with RTP4. Interacts with SYP and GNAS. Interacts with RGS9, RGS17, RGS20, RGS4, PPP1R9B and HINT1. Isoform 9 interacts with GRPR. In terms of processing, phosphorylated. Differentially phosphorylated in basal and agonist-induced conditions. Agonist-mediated phosphorylation modulates receptor internalization. Phosphorylated by GRK2 in a agonist-dependent manner. Phosphorylation at Tyr-166 requires receptor activation, is dependent on non-receptor protein tyrosine kinase Src and results in a decrease in agonist efficacy by reducing G-protein coupling efficiency. Phosphorylated on tyrosine residues; the phosphorylation is involved in agonist-induced G-protein-independent receptor down-regulation. Phosphorylation at Ser-375 is involved in G-protein-dependent but not beta-arrestin-dependent activation of the ERK pathway. Ubiquitinated. A basal ubiquitination seems not to be related to degradation. Ubiquitination is increased upon formation of OPRM1:OPRD1 oligomers leading to proteasomal degradation; the ubiquitination is diminished by RTP4.

Its subcellular location is the cell membrane. It is found in the cell projection. The protein localises to the axon. The protein resides in the perikaryon. It localises to the dendrite. Its subcellular location is the endosome. Its function is as follows. Receptor for endogenous opioids such as beta-endorphin and endomorphin. Receptor for natural and synthetic opioids including morphine, heroin, DAMGO, fentanyl, etorphine, buprenorphin and methadone. Also activated by enkephalin peptides, such as Met-enkephalin or Met-enkephalin-Arg-Phe, with higher affinity for Met-enkephalin-Arg-Phe. Agonist binding to the receptor induces coupling to an inactive GDP-bound heterotrimeric G-protein complex and subsequent exchange of GDP for GTP in the G-protein alpha subunit leading to dissociation of the G-protein complex with the free GTP-bound G-protein alpha and the G-protein beta-gamma dimer activating downstream cellular effectors. The agonist- and cell type-specific activity is predominantly coupled to pertussis toxin-sensitive G(i) and G(o) G alpha proteins, GNAI1, GNAI2, GNAI3 and GNAO1 isoforms Alpha-1 and Alpha-2, and to a lesser extent to pertussis toxin-insensitive G alpha proteins GNAZ and GNA15. They mediate an array of downstream cellular responses, including inhibition of adenylate cyclase activity and both N-type and L-type calcium channels, activation of inward rectifying potassium channels, mitogen-activated protein kinase (MAPK), phospholipase C (PLC), phosphoinositide/protein kinase (PKC), phosphoinositide 3-kinase (PI3K) and regulation of NF-kappa-B. Also couples to adenylate cyclase stimulatory G alpha proteins. The selective temporal coupling to G-proteins and subsequent signaling can be regulated by RGSZ proteins, such as RGS9, RGS17 and RGS4. Phosphorylation by members of the GPRK subfamily of Ser/Thr protein kinases and association with beta-arrestins is involved in short-term receptor desensitization. Beta-arrestins associate with the GPRK-phosphorylated receptor and uncouple it from the G-protein thus terminating signal transduction. The phosphorylated receptor is internalized through endocytosis via clathrin-coated pits which involves beta-arrestins. The activation of the ERK pathway occurs either in a G-protein-dependent or a beta-arrestin-dependent manner and is regulated by agonist-specific receptor phosphorylation. Acts as a class A G-protein coupled receptor (GPCR) which dissociates from beta-arrestin at or near the plasma membrane and undergoes rapid recycling. Receptor down-regulation pathways are varying with the agonist and occur dependent or independent of G-protein coupling. Endogenous ligands induce rapid desensitization, endocytosis and recycling. Heterooligomerization with other GPCRs can modulate agonist binding, signaling and trafficking properties. Functionally, isoform 9 is involved in morphine-induced scratching and seems to cross-activate GRPR in response to morphine. This is Mu-type opioid receptor (Oprm1) from Mus musculus (Mouse).